The sequence spans 368 residues: Glutaminyl-peptide cyclotransferase (368 aa).

Positions 1 to 33 are cleaved as a signal peptide; that stretch reads MARERRDSKAATFFCLAWALCLALPGFPQHVSG. N-linked (GlcNAc...) asparagine glycosylation occurs at Asn53. Cys143 and Cys169 form a disulfide bridge. Asp164 serves as a coordination point for Zn(2+). The active-site Proton acceptor is Glu207. Glu208 is a Zn(2+) binding site. The active-site Proton acceptor is Asp254. An N-linked (GlcNAc...) asparagine glycan is attached at Asn292. Zn(2+) is bound at residue His336. Residue Asn352 is glycosylated (N-linked (GlcNAc...) asparagine).

It belongs to the glutaminyl-peptide cyclotransferase family. Expressed by the venom gland.

The protein localises to the secreted. It catalyses the reaction N-terminal L-glutaminyl-[peptide] = N-terminal 5-oxo-L-prolyl-[peptide] + NH4(+). Responsible for the biosynthesis of pyroglutamyl peptides. Has a bias against acidic and tryptophan residues adjacent to the N-terminal glutaminyl residue and a lack of importance of chain length after the second residue. Also catalyzes N-terminal pyroglutamate formation. This is Glutaminyl-peptide cyclotransferase (QPCT) from Gloydius blomhoffii (Mamushi).